Consider the following 507-residue polypeptide: Xaa-Pro aminopeptidase 3 (507 aa).

The N-terminal 31 residues, 1–31, are a transit peptide targeting the mitochondrion; the sequence is MPWLLSAPKLVPAVANVRGLSGCMLCSQRRY. Positions 54 to 79 are interaction with TNFRSF1B; sequence HPHLLRPGEVTPGLSQVEYALRRHKL. Residues Tyr-300, Asp-331, Asp-342, His-424, His-431, Glu-451, and Glu-475 each coordinate substrate. Mn(2+)-binding residues include Asp-331, Asp-342, and His-424. Positions 451 and 475 each coordinate Mn(2+).

The protein belongs to the peptidase M24B family. Homodimer. Isoform 1 interacts with TNFRSF1B/TNFR2 (activated) and TRAF2. The cofactor is Mn(2+). In terms of tissue distribution, isoform 1 and isoform 2 are widely expressed, with isoform 1 being more abundant.

Its subcellular location is the mitochondrion. It is found in the cytoplasm. The enzyme catalyses Release of any N-terminal amino acid, including proline, that is linked to proline, even from a dipeptide or tripeptide.. Catalyzes the removal of a penultimate prolyl residue from the N-termini of peptides, such as Leu-Pro-Ala. Also shows low activity towards peptides with Ala or Ser at the P1 position. In terms of biological role, promotes TNFRSF1B-mediated phosphorylation of MAPK8/JNK1 and MAPK9/JNK2, suggesting a function as an adapter protein for TNFRSF1B; the effect is independent of XPNPEP3 peptidase activity. May inhibit apoptotic cell death induced via TNF-TNFRSF1B signaling. This is Xaa-Pro aminopeptidase 3 (XPNPEP3) from Homo sapiens (Human).